A 260-amino-acid polypeptide reads, in one-letter code: Phosphate import ATP-binding protein PstB (260 aa).

Residues 13 to 255 (MRAQGVNVFY…PKQERTKDYI (243 aa)) form the ABC transporter domain. 45–52 (GPSGCGKS) lines the ATP pocket.

It belongs to the ABC transporter superfamily. Phosphate importer (TC 3.A.1.7) family. As to quaternary structure, the complex is composed of two ATP-binding proteins (PstB), two transmembrane proteins (PstC and PstA) and a solute-binding protein (PstS).

The protein resides in the cell inner membrane. The catalysed reaction is phosphate(out) + ATP + H2O = ADP + 2 phosphate(in) + H(+). In terms of biological role, part of the ABC transporter complex PstSACB involved in phosphate import. Responsible for energy coupling to the transport system. This Sphingopyxis alaskensis (strain DSM 13593 / LMG 18877 / RB2256) (Sphingomonas alaskensis) protein is Phosphate import ATP-binding protein PstB.